The following is a 369-amino-acid chain: Deoxyuridine 5'-triphosphate nucleotidohydrolase (369 aa).

Substrate contacts are provided by residues 258-260 (RSS) and 364-365 (FG).

Belongs to the dUTPase family. Requires Mg(2+) as cofactor.

It carries out the reaction dUTP + H2O = dUMP + diphosphate + H(+). In terms of biological role, involved in nucleotide metabolism: produces dUMP, the immediate precursor of thymidine nucleotides and decreases the intracellular concentration of dUTP to avoid uracil incorporation into viral DNA. In Homo sapiens (Human), this protein is Deoxyuridine 5'-triphosphate nucleotidohydrolase.